The chain runs to 210 residues: Na(+)-translocating NADH-quinone reductase subunit D (210 aa).

Transmembrane regions (helical) follow at residues 10–30 (VLFG…GVCS), 42–62 (LVMS…ISMI), 72–92 (IIVQ…ILKA), 103–123 (VFVG…AFAM), 143–163 (FVLI…ILGF), and 178–198 (NGLL…IWFI).

This sequence belongs to the NqrDE/RnfAE family. Composed of six subunits; NqrA, NqrB, NqrC, NqrD, NqrE and NqrF.

The protein localises to the cell inner membrane. It catalyses the reaction a ubiquinone + n Na(+)(in) + NADH + H(+) = a ubiquinol + n Na(+)(out) + NAD(+). In terms of biological role, NQR complex catalyzes the reduction of ubiquinone-1 to ubiquinol by two successive reactions, coupled with the transport of Na(+) ions from the cytoplasm to the periplasm. NqrA to NqrE are probably involved in the second step, the conversion of ubisemiquinone to ubiquinol. This chain is Na(+)-translocating NADH-quinone reductase subunit D, found in Pseudoalteromonas atlantica (strain T6c / ATCC BAA-1087).